Reading from the N-terminus, the 601-residue chain is Regulatory protein BlaR1 (601 aa).

Residues 1–8 (MSSSFFIP) are Extracellular-facing. Residues 9–26 (FLVSQILLSLFFSIIILI) form a helical membrane-spanning segment. Topologically, residues 27-35 (KKLLRTQIT) are cytoplasmic. Residues 36–52 (VGTHYYISVISLLALIA) traverse the membrane as a helical segment. At 53–115 (PFIPFHFLKS…EQSSSKMIDS (63 aa)) the chain is on the extracellular side. Residues 116-133 (AFFAVWILGVAVMLLATL) form a helical membrane-spanning segment. Residues 134–322 (YSNLKIGKIK…QTASPLLKAK (189 aa)) are Cytoplasmic-facing. A helical transmembrane segment spans residues 323–339 (SALVFTLVLGAILAGTP). At 340–601 (SVSILAMQKE…KKGIYPSVSR (262 aa)) the chain is on the extracellular side. The beta-lactam antibiotic sensor domain stretch occupies residues 354–601 (PGTNVEYEDY…KKGIYPSVSR (248 aa)). Ser402 acts as the Acyl-ester intermediate in catalysis. Lys405 carries the post-translational modification N6-carboxylysine.

The protein belongs to the peptidase M56 family. In terms of processing, carboxylation occurs on two lysine residues. Carboxylation at 'Lys-405' activates the active site serine residue for acylation. On acylation, the lysine side chain experiences a spontaneous decarboxylation that entraps the sensor in its activated state.

It is found in the cell membrane. Its function is as follows. Integral membrane protein involved in sensing of the presence of beta-lactam antibiotics and transduction of the information to the cytoplasm. Mechanistically, activation of the signal transducer involves acylation of a serine in the C-terminal sensor domain upon binding of the beta-lactam antibiotic. In turn, a conformational change occurs and the signal is transmitted from the cell surface to the cytoplasm. There, the zinc protease domain is activated and initiates autoproteolysis as well as cleavage of the transcriptional repressor BlaI leading to derepression of antibiotic resistance genes. This chain is Regulatory protein BlaR1 (blaR1), found in Bacillus licheniformis.